Consider the following 537-residue polypeptide: Di/tripeptide-binding protein 1 (537 aa).

An N-terminal signal peptide occupies residues 1–29 (MRRNAVIRSAIMPSLLGAALVAAVPQAFA).

This sequence belongs to the bacterial solute-binding protein 5 family. As to quaternary structure, the complex is composed of two ATP-binding proteins (DppD and DppF), two transmembrane proteins (DppB and DppC) and a solute-binding protein (DppA1). Five orthologous SBPs (DppA1-A5) are present in P.aeruginosa, which increases the substrate specificity of the DppBCDF transporter.

Part of the ABC transporter DppABCDF involved in the uptake of various di/tripeptides. Prefers dipeptides with acidic residues at the C-terminal end. Involved in the uptake of phaseolotoxin, a toxic tripeptide inhibiting the enzyme ornithine carbamoyltransferase. This is Di/tripeptide-binding protein 1 from Pseudomonas aeruginosa (strain UCBPP-PA14).